The chain runs to 187 residues: Virulence protein ATR13 (187 aa).

A signal peptide spans 1 to 19 (MRLVHAVLLPGIIVFVSNG). The RxLR signature appears at 38 to 41 (RQLR). Residues 50–92 (LSRASFGLGKAQDPLDKFFRKIINSRKPIETSYSAKGIHEKII) form a leucine heptad repeat region region. 4 consecutive repeat copies span residues 93–103 (KAYDRHVFESK), 104–114 (KAHDRHVSKSK), 115–125 (KAHGRHVSKSK), and 126–136 (MAHDRHVSKSE). Positions 93 to 136 (KAYDRHVFESKKAHDRHVSKSKKAHGRHVSKSKMAHDRHVSKSE) are 4 X 11 AA tandem repeats. The interval 104-136 (KAHDRHVSKSKKAHGRHVSKSKMAHDRHVSKSE) is disordered. Residues 111 to 125 (SKSKKAHGRHVSKSK) are compositionally biased toward basic residues. A compositionally biased stretch (basic and acidic residues) spans 126–136 (MAHDRHVSKSE). A highly variable C-terminus domain region spans residues 137 to 187 (KAPIQYASVADYLKKIYPGTDIERIVSTLKRHDEVGAKDLGAKLQTAVASQ).

The protein belongs to the RxLR effector family.

It localises to the secreted. The protein localises to the host nucleus. Its subcellular location is the host nucleolus. The protein resides in the host cytoplasm. Secreted effector that acts as an elicitor of hypersensitive response (HR) specifically on plants carrying defense protein RPP13. Recognition of ATR13 by RPP13 initiates defense responses that are effective against oomycete, bacterial and viral pathogens. Due to high polymorphism, ATR13-Emoy2 does not recognize RPP13-Nd, the RPP13 defense protein from Arabidopsis thaliana ecotype Niederzenz. ATR13-Emoy2 is recognized by RPP13 variants RPP13-UKID44, RPP13-UKID65 and RPP13-UKID71. In Hyaloperonospora arabidopsidis (strain Emoy2) (Downy mildew agent), this protein is Virulence protein ATR13.